A 446-amino-acid polypeptide reads, in one-letter code: Homocitrate synthase, mitochondrial (446 aa).

A compositionally biased stretch (low complexity) spans 1-14 (MCATDNAPAANAAP). Positions 1-36 (MCATDNAPAANAAPEKPSNVGVEVGHTGEQTNPYGA) are disordered. The region spanning 48 to 307 (FQLIESTLRE…HKLRDLENLV (260 aa)) is the Pyruvate carboxyltransferase domain. Arg-56 contributes to the 2-oxoglutarate binding site. Glu-57 serves as a coordination point for Mg(2+). The 2-oxoglutarate site is built by His-116, Arg-176, and Thr-210. Mg(2+) contacts are provided by His-237 and His-239. The Proton acceptor role is filled by His-334. The segment at 422–446 (TPTVAATEGPAVEDEPAAKKAKTEE) is disordered. The segment covering 437–446 (PAAKKAKTEE) has biased composition (basic and acidic residues).

This sequence belongs to the alpha-IPM synthase/homocitrate synthase family. Homocitrate synthase LYS20/LYS21 subfamily. The cofactor is Mg(2+). Requires Mn(2+) as cofactor.

It is found in the mitochondrion. It catalyses the reaction acetyl-CoA + 2-oxoglutarate + H2O = (2R)-homocitrate + CoA + H(+). It functions in the pathway amino-acid biosynthesis; L-lysine biosynthesis via AAA pathway; L-alpha-aminoadipate from 2-oxoglutarate: step 1/5. Functionally, catalyzes the aldol-type condensation of 2-oxoglutarate with acetyl-CoA to yield homocitrate. Carries out the first step of the alpha-aminoadipate (AAA) lysine biosynthesis pathway. This chain is Homocitrate synthase, mitochondrial (LYS1), found in Yarrowia lipolytica (strain CLIB 122 / E 150) (Yeast).